A 523-amino-acid chain; its full sequence is Mogroside I-A1 synthase (523 aa).

Catalysis depends on H39, which acts as the Proton acceptor. Catalysis depends on D136, which acts as the Charge relay. Residues S311, Q374, W392, N393, S394, E397, D413, and Q414 each coordinate UDP-alpha-D-glucose.

Belongs to the UDP-glycosyltransferase family. As to expression, highly expressed in young fruits 15 and 34 days after anthesis (15-DAA and 34-DAA).

The catalysed reaction is mogrol + UDP-alpha-D-glucose = mogroside I-A1 + UDP + H(+). It catalyses the reaction mogroside I-A1 + UDP-alpha-D-glucose = mogroside IIE + UDP + H(+). The enzyme catalyses mogroside IE + UDP-alpha-D-glucose = mogroside IIE + UDP + H(+). It carries out the reaction mogroside II-A1 + UDP-alpha-D-glucose = mogroside IIIX + UDP + H(+). The catalysed reaction is mogroside II-A + UDP-alpha-D-glucose = mogroside III + UDP + H(+). It catalyses the reaction mogroside IIE + UDP-alpha-D-glucose = mogroside III-C3(1-&gt;6) + UDP + H(+). The enzyme catalyses mogroside III + UDP-alpha-D-glucose = isomogroside IV + UDP + H(+). It carries out the reaction mogroside III + UDP-alpha-D-glucose = mogroside IV + UDP + H(+). The catalysed reaction is mogroside IIIX + UDP-alpha-D-glucose = mogroside IVA + UDP + H(+). It catalyses the reaction siamenoside I + UDP-alpha-D-glucose = isomogroside V + UDP + H(+). It participates in secondary metabolite biosynthesis; terpenoid biosynthesis. Functionally, UDP-glycosyltransferase involved in the biosynthesis of cucurbitacin and mogroside tetracyclic triterpene natural products (e.g. siamenoside I and mogrosides IV, V and VI). Cucurbitacins have cytotoxic properties and exhibit deterrent taste as a defense barrier against herbivores. Mogrosides are nonsugar highly oxygenated compounds used as high-intensity zero-calorie sweeteners; they also possess pharmacological properties such as regulating immunity, lowering blood sugar and lipid levels, protecting the liver, and acting as antioxidants and antitumor agents. Catalyzes the C24 primary glucosylation of mogrol and mogroside I-E1, and the C3 primary glucosylation of mogroside I-A1, mogroside II-A1 and mogroside II-A. Also supports branching glucosylations of mogroside II-E, mogroside III, mogroside IIIx and siamenoside I. The polypeptide is Mogroside I-A1 synthase (Siraitia grosvenorii (Monk's fruit)).